Here is a 1393-residue protein sequence, read N- to C-terminus: DNA-directed RNA polymerase subunit beta' (1393 aa).

Zn(2+)-binding residues include Cys72, Cys74, Cys87, and Cys90. Positions 463, 465, and 467 each coordinate Mg(2+). Positions 812, 887, 894, and 897 each coordinate Zn(2+).

The protein belongs to the RNA polymerase beta' chain family. The RNAP catalytic core consists of 2 alpha, 1 beta, 1 beta' and 1 omega subunit. When a sigma factor is associated with the core the holoenzyme is formed, which can initiate transcription. Mg(2+) serves as cofactor. It depends on Zn(2+) as a cofactor.

The enzyme catalyses RNA(n) + a ribonucleoside 5'-triphosphate = RNA(n+1) + diphosphate. DNA-dependent RNA polymerase catalyzes the transcription of DNA into RNA using the four ribonucleoside triphosphates as substrates. The protein is DNA-directed RNA polymerase subunit beta' of Chlamydia abortus (strain DSM 27085 / S26/3) (Chlamydophila abortus).